Consider the following 215-residue polypeptide: Sodium channel regulatory subunit beta-3 (215 aa).

An N-terminal signal peptide occupies residues 1–22 (MPAFNRLFPLASLLLILWVGVC). Topologically, residues 23-156 (FPVCVEVPSE…EEAGEDFTSV (134 aa)) are extracellular. Intrachain disulfides connect C26–C48 and C45–C120. An Ig-like C2-type domain is found at 32–154 (ETEAVQGNPM…VTEEAGEDFT (123 aa)). N95, N109, N113, and N121 each carry an N-linked (GlcNAc...) asparagine glycan. A helical transmembrane segment spans residues 157–178 (VSEIMMYILLVFLTLWLLIEMI). Residues 179–215 (YCYRKVSKAEEAAQENASDYLAIPSENKENSAVPVEE) are Cytoplasmic-facing.

It belongs to the sodium channel auxiliary subunit SCN3B (TC 8.A.17) family. A voltage-gated sodium (Nav) channel consists of an ion-conducting pore-forming alpha subunit functional on its own that is regulated by one or more beta subunits. Forms homodimers and homotrimers. SCN3B is non-covalently associated with alpha subunits and induces the formation of alpha subunit oligomers, including trimers. Interacts with SCN5A/Nav1.5; regulatory subunit of SCN5A/Nav1.5. Interacts with SCN7A/Nav2.1; probable regulatory subunit of SCN7A/Nav2.1. Interacts with SCN10A; regulatory subunit of SCN10A/Nav1.8. Interacts with NFASC; probably involved in targeting the sodium channels to the nodes of Ranvier. In terms of processing, intramolecular disulfide bonds favor the voltage-gated sodium channel oligomeric complex assembly. N-glycosylated.

It is found in the cell membrane. Regulatory subunit of multiple voltage-gated sodium (Nav) channels directly mediating the depolarization of excitable membranes. Navs, also called VGSCs (voltage-gated sodium channels) or VDSCs (voltage-dependent sodium channels), operate by switching between closed and open conformations depending on the voltage difference across the membrane. In the open conformation they allow Na(+) ions to selectively pass through the pore, along their electrochemical gradient. The influx of Na+ ions provokes membrane depolarization, initiating the propagation of electrical signals throughout cells and tissues. The accessory beta subunits participate in localization and functional modulation of the Nav channels. Modulates the activity of SCN2A/Nav1.2, causing a hyperpolarizing shift in the voltage-dependence of inactivation of the channel and increasing the fraction of channels operating in the fast gating mode. Modulates the activity of SCN5A/Nav1.5. Could also regulate the atypical sodium channel SCN7A/Nav2.1. Modulates the activity of SCN10A/Nav1.8, regulating its oligomerization and accelerating the recovery from inactivation. This Bos taurus (Bovine) protein is Sodium channel regulatory subunit beta-3.